Here is a 306-residue protein sequence, read N- to C-terminus: Probable cobalamin biosynthesis protein CobD (306 aa).

The next 5 membrane-spanning stretches (helical) occupy residues Leu54–Ile74, Ile88–Ser108, Ile155–Phe175, Ile207–Tyr227, and Ser286–Met306.

This sequence belongs to the CobD/CbiB family.

It localises to the cell membrane. The protein operates within cofactor biosynthesis; adenosylcobalamin biosynthesis. Converts cobyric acid to cobinamide by the addition of aminopropanol on the F carboxylic group. The sequence is that of Probable cobalamin biosynthesis protein CobD from Methanococcus maripaludis (strain DSM 14266 / JCM 13030 / NBRC 101832 / S2 / LL).